We begin with the raw amino-acid sequence, 213 residues long: Octanoyltransferase (213 aa).

The BPL/LPL catalytic domain occupies 32–207 (ENSHDEIWLV…NILALLNNPP (176 aa)). Residues 71–78 (RGGQVTYH), 138–140 (SLG), and 151–153 (GLA) contribute to the substrate site. The active-site Acyl-thioester intermediate is Cys-169.

Belongs to the LipB family.

It is found in the cytoplasm. It catalyses the reaction octanoyl-[ACP] + L-lysyl-[protein] = N(6)-octanoyl-L-lysyl-[protein] + holo-[ACP] + H(+). It functions in the pathway protein modification; protein lipoylation via endogenous pathway; protein N(6)-(lipoyl)lysine from octanoyl-[acyl-carrier-protein]: step 1/2. Its function is as follows. Catalyzes the transfer of endogenously produced octanoic acid from octanoyl-acyl-carrier-protein onto the lipoyl domains of lipoate-dependent enzymes. Lipoyl-ACP can also act as a substrate although octanoyl-ACP is likely to be the physiological substrate. The polypeptide is Octanoyltransferase (Salmonella paratyphi A (strain ATCC 9150 / SARB42)).